The chain runs to 98 residues: NADH-ubiquinone oxidoreductase chain 4L (98 aa).

A run of 3 helical transmembrane segments spans residues 1 to 21 (MPVV…GLLI), 29 to 49 (SLLC…VTVL), and 61 to 81 (IILL…LVMV).

The protein belongs to the complex I subunit 4L family. As to quaternary structure, core subunit of respiratory chain NADH dehydrogenase (Complex I) which is composed of 45 different subunits.

Its subcellular location is the mitochondrion inner membrane. The catalysed reaction is a ubiquinone + NADH + 5 H(+)(in) = a ubiquinol + NAD(+) + 4 H(+)(out). Its function is as follows. Core subunit of the mitochondrial membrane respiratory chain NADH dehydrogenase (Complex I) which catalyzes electron transfer from NADH through the respiratory chain, using ubiquinone as an electron acceptor. Part of the enzyme membrane arm which is embedded in the lipid bilayer and involved in proton translocation. This is NADH-ubiquinone oxidoreductase chain 4L (MT-ND4L) from Ursus americanus (American black bear).